We begin with the raw amino-acid sequence, 154 residues long: Probable ubiquitin-conjugating enzyme E2 31 (154 aa).

The UBC core domain maps to 8–153 (KAAQRIAMEY…AREFTARHAN (146 aa)). The active-site Glycyl thioester intermediate is C91.

It belongs to the ubiquitin-conjugating enzyme family.

It carries out the reaction S-ubiquitinyl-[E1 ubiquitin-activating enzyme]-L-cysteine + [E2 ubiquitin-conjugating enzyme]-L-cysteine = [E1 ubiquitin-activating enzyme]-L-cysteine + S-ubiquitinyl-[E2 ubiquitin-conjugating enzyme]-L-cysteine.. Its pathway is protein modification; protein ubiquitination. In terms of biological role, accepts the ubiquitin from the E1 complex and catalyzes its covalent attachment to other proteins. The polypeptide is Probable ubiquitin-conjugating enzyme E2 31 (UBC31) (Arabidopsis thaliana (Mouse-ear cress)).